Reading from the N-terminus, the 201-residue chain is Small ribosomal subunit protein uS4 (201 aa).

Residues 91–157 form the S4 RNA-binding domain; that stretch reads SRLDNVIYRA…VPFQIARETA (67 aa).

This sequence belongs to the universal ribosomal protein uS4 family. Part of the 30S ribosomal subunit. Contacts protein S5. The interaction surface between S4 and S5 is involved in control of translational fidelity.

Its function is as follows. One of the primary rRNA binding proteins, it binds directly to 16S rRNA where it nucleates assembly of the body of the 30S subunit. In terms of biological role, with S5 and S12 plays an important role in translational accuracy. In Mycobacterium tuberculosis (strain ATCC 25177 / H37Ra), this protein is Small ribosomal subunit protein uS4.